The chain runs to 312 residues: Oxidoreductase NAD-binding domain-containing protein 1 (312 aa).

Positions 1 to 17 (MACAAVMIPGLLRCSVG) are cleaved as a signal peptide. The FAD-binding FR-type domain maps to 50 to 186 (HMERTASVLR…GGVGINPLLS (137 aa)). 178–183 (GVGINP) is an NAD(+) binding site.

This Homo sapiens (Human) protein is Oxidoreductase NAD-binding domain-containing protein 1 (OXNAD1).